The following is a 355-amino-acid chain: Protein ATP1B4 (355 aa).

Over 1–108 (MRRQLRSRRA…SLARTGQSLS (108 aa)) the chain is Nuclear. The tract at residues 35–76 (EEEEAEEARVMVVPDLEEEEKEEEEEKEEDEKEEEESHHQDT) is disordered. Positions 49 to 68 (DLEEEEKEEEEEKEEDEKEE) are enriched in acidic residues. Residues 109-129 (LLLVIYFFFYASLAAVITLCM) traverse the membrane as a helical; Signal-anchor for type II membrane protein segment. The Perinuclear space segment spans residues 130-355 (YTLFLTISPY…RVIFTLNIET (226 aa)).

Belongs to the X(+)/potassium ATPases subunit beta family. In terms of assembly, associates with a SMAD7-transcriptional complex. Interacts with SNW1 and TOR1AIP1. Does not associate with known Na,K-ATPase alpha-subunits. As to expression, expressed in skeletal muscle (at protein level). Expressed during postnatal development in skeletal muscle and heart.

The protein resides in the nucleus inner membrane. In terms of biological role, may act as a transcriptional coregulator during muscle development through its interaction with SNW1. Has lost its ancestral function as a Na,K-ATPase beta-subunit. In Sus scrofa (Pig), this protein is Protein ATP1B4 (ATP1B4).